The chain runs to 360 residues: Histidinol-phosphate aminotransferase (360 aa).

Position 208 is an N6-(pyridoxal phosphate)lysine (K208).

It belongs to the class-II pyridoxal-phosphate-dependent aminotransferase family. Histidinol-phosphate aminotransferase subfamily. Homodimer. Pyridoxal 5'-phosphate is required as a cofactor.

It catalyses the reaction L-histidinol phosphate + 2-oxoglutarate = 3-(imidazol-4-yl)-2-oxopropyl phosphate + L-glutamate. Its pathway is amino-acid biosynthesis; L-histidine biosynthesis; L-histidine from 5-phospho-alpha-D-ribose 1-diphosphate: step 7/9. The polypeptide is Histidinol-phosphate aminotransferase (hisC) (Lactococcus lactis subsp. lactis (strain IL1403) (Streptococcus lactis)).